Reading from the N-terminus, the 186-residue chain is Adenine phosphoribosyltransferase (186 aa).

The protein belongs to the purine/pyrimidine phosphoribosyltransferase family. In terms of assembly, homodimer.

Its subcellular location is the cytoplasm. The catalysed reaction is AMP + diphosphate = 5-phospho-alpha-D-ribose 1-diphosphate + adenine. It participates in purine metabolism; AMP biosynthesis via salvage pathway; AMP from adenine: step 1/1. In terms of biological role, catalyzes a salvage reaction resulting in the formation of AMP, that is energically less costly than de novo synthesis. The chain is Adenine phosphoribosyltransferase from Xanthomonas oryzae pv. oryzae (strain PXO99A).